The chain runs to 137 residues: ATP synthase epsilon chain (137 aa).

It belongs to the ATPase epsilon chain family. F-type ATPases have 2 components, CF(1) - the catalytic core - and CF(0) - the membrane proton channel. CF(1) has five subunits: alpha(3), beta(3), gamma(1), delta(1), epsilon(1). CF(0) has three main subunits: a, b and c.

Its subcellular location is the cell membrane. Its function is as follows. Produces ATP from ADP in the presence of a proton gradient across the membrane. The protein is ATP synthase epsilon chain of Syntrophomonas wolfei subsp. wolfei (strain DSM 2245B / Goettingen).